The sequence spans 75 residues: Small ribosomal subunit protein bS18 (75 aa).

The protein belongs to the bacterial ribosomal protein bS18 family. In terms of assembly, part of the 30S ribosomal subunit. Forms a tight heterodimer with protein bS6.

Binds as a heterodimer with protein bS6 to the central domain of the 16S rRNA, where it helps stabilize the platform of the 30S subunit. The polypeptide is Small ribosomal subunit protein bS18 (Aliivibrio fischeri (strain ATCC 700601 / ES114) (Vibrio fischeri)).